A 792-amino-acid polypeptide reads, in one-letter code: Zinc finger protein 606 (792 aa).

The 72-residue stretch at 62 to 133 (VTFKDVAVDF…EQACPQRTCP (72 aa)) folds into the KRAB domain. A C2H2-type 1; degenerate zinc finger spans residues 289–311 (FKCTDAVKSFNHIIHFGDHKGIH). The segment at 317-344 (YEYKECHQIFNQSPSFNEHPRLHVGENQ) adopts a C2H2-type 2; degenerate zinc-finger fold. Residues 400-422 (YDYNECGTSFIWSSYLIQHKKTH) form a C2H2-type 3; degenerate zinc finger. C2H2-type zinc fingers lie at residues 428-450 (YECDKCGKVFRNRSALTKHERTH), 456-478 (YECNKCGKAFSWNSHLIVHKRIH), 484-506 (YVCNECGKSFNWNSHLIGHQRTH), 512-534 (FECTECGKSFSWSSHLIAHMRMH), 540-562 (FKCDECEKAFRDYSALSKHERTH), 568-590 (YKCTECGKSFSWSSHLIAHQRTH), 596-618 (YNCQECGKAFRERSALTKHEIIH), 624-646 (YECNKCGKSCSQMAHLVRHQRTH), 652-674 (YECNKCGKSFSQSCHLVAHRRIH), 680-702 (YKCNQCERSFNCSSHLIAHRRTH), 708-730 (YRCNECGKAFNESSSLIVHLRNH), 736-758 (YKCNHCEKAFCKNSSLIIHQRMH), and 764-786 (FICSECGKAFSGHSALLQHQRNH).

Belongs to the krueppel C2H2-type zinc-finger protein family. As to expression, widely expressed in adult and fetal tissues.

It is found in the nucleus. Functionally, may act as a transcriptional repressor. In Homo sapiens (Human), this protein is Zinc finger protein 606 (ZNF606).